A 158-amino-acid chain; its full sequence is 2-C-methyl-D-erythritol 2,4-cyclodiphosphate synthase (158 aa).

Residues aspartate 8 and histidine 10 each contribute to the a divalent metal cation site. Residues 8–10 (DVH) and 34–35 (HS) each bind 4-CDP-2-C-methyl-D-erythritol 2-phosphate. An a divalent metal cation-binding site is contributed by histidine 42. 4-CDP-2-C-methyl-D-erythritol 2-phosphate is bound by residues 56 to 58 (DIG), 61 to 65 (FPDTD), 100 to 106 (AQRPKMA), 132 to 135 (TTEE), phenylalanine 139, and arginine 142.

It belongs to the IspF family. In terms of assembly, homotrimer. The cofactor is a divalent metal cation.

It carries out the reaction 4-CDP-2-C-methyl-D-erythritol 2-phosphate = 2-C-methyl-D-erythritol 2,4-cyclic diphosphate + CMP. Its pathway is isoprenoid biosynthesis; isopentenyl diphosphate biosynthesis via DXP pathway; isopentenyl diphosphate from 1-deoxy-D-xylulose 5-phosphate: step 4/6. Functionally, involved in the biosynthesis of isopentenyl diphosphate (IPP) and dimethylallyl diphosphate (DMAPP), two major building blocks of isoprenoid compounds. Catalyzes the conversion of 4-diphosphocytidyl-2-C-methyl-D-erythritol 2-phosphate (CDP-ME2P) to 2-C-methyl-D-erythritol 2,4-cyclodiphosphate (ME-CPP) with a corresponding release of cytidine 5-monophosphate (CMP). The sequence is that of 2-C-methyl-D-erythritol 2,4-cyclodiphosphate synthase from Pelobacter propionicus (strain DSM 2379 / NBRC 103807 / OttBd1).